Reading from the N-terminus, the 393-residue chain is uncharacterized protein (393 aa).

8 helical membrane-spanning segments follow: residues 15 to 35 (IVAFSFFLVFLIVISVIVTIF), 56 to 76 (WGWIFVVILGFLVSVLWNVII), 86 to 106 (FYASWWEWLLFGFVVQFFQIV), 131 to 151 (AVLIVTSTGAFWNLSQALITW), 176 to 196 (LSLTGMIFDVVVAILFIVIAF), 253 to 273 (LLANMVVAIVSYFSLFGVFMI), 289 to 309 (LIDLFNITNIAVTASNFIPVA), and 349 to 369 (VYLPAIFTGICFVVWIVQVIW).

It localises to the cell membrane. This is an uncharacterized protein from Mycoplasma genitalium (strain ATCC 33530 / DSM 19775 / NCTC 10195 / G37) (Mycoplasmoides genitalium).